The sequence spans 201 residues: Glutathione peroxidase 1 (201 aa).

Serine 32 is subject to Phosphoserine. Selenocysteine 47 is an active-site residue. Selenocysteine 47 is a non-standard amino acid (selenocysteine). N6-acetyllysine; alternate occurs at positions 86 and 112. An N6-succinyllysine; alternate mark is found at lysine 86 and lysine 112. An N6-acetyllysine modification is found at lysine 119. An N6-acetyllysine; alternate modification is found at lysine 146. An N6-succinyllysine; alternate modification is found at lysine 146. Phosphoserine occurs at positions 195 and 199.

Belongs to the glutathione peroxidase family. As to quaternary structure, homotetramer. Interacts with MIEN1. Post-translationally, during periods of oxidative stress, Sec-47 may react with a superoxide radical, irreversibly lose hydroselenide and be converted to dehydroalanine. As to expression, expressed in liver and lung.

Its subcellular location is the cytoplasm. It is found in the mitochondrion. The enzyme catalyses 2 glutathione + H2O2 = glutathione disulfide + 2 H2O. It catalyses the reaction a hydroperoxy polyunsaturated fatty acid + 2 glutathione = a hydroxy polyunsaturated fatty acid + glutathione disulfide + H2O. The catalysed reaction is tert-butyl hydroperoxide + 2 glutathione = tert-butanol + glutathione disulfide + H2O. It carries out the reaction cumene hydroperoxide + 2 glutathione = 2-phenylpropan-2-ol + glutathione disulfide + H2O. The enzyme catalyses (13S)-hydroperoxy-(9Z,11E)-octadecadienoate + 2 glutathione = (13S)-hydroxy-(9Z,11E)-octadecadienoate + glutathione disulfide + H2O. It catalyses the reaction (9S)-hydroperoxy-(10E,12Z)-octadecadienoate + 2 glutathione = (9S)-hydroxy-(10E,12Z)-octadecadienoate + glutathione disulfide + H2O. The catalysed reaction is (5S)-hydroperoxy-(6E,8Z,11Z,14Z)-eicosatetraenoate + 2 glutathione = (5S)-hydroxy-(6E,8Z,11Z,14Z)-eicosatetraenoate + glutathione disulfide + H2O. It carries out the reaction (12S)-hydroperoxy-(5Z,8Z,10E,14Z)-eicosatetraenoate + 2 glutathione = (12S)-hydroxy-(5Z,8Z,10E,14Z)-eicosatetraenoate + glutathione disulfide + H2O. The enzyme catalyses (12R)-hydroperoxy-(5Z,8Z,10E,14Z)-eicosatetraenoate + 2 glutathione = (12R)-hydroxy-(5Z,8Z,10E,14Z)-eicosatetraenoate + glutathione disulfide + H2O. It catalyses the reaction (15S)-hydroperoxy-(5Z,8Z,11Z,13E)-eicosatetraenoate + 2 glutathione = (15S)-hydroxy-(5Z,8Z,11Z,13E)-eicosatetraenoate + glutathione disulfide + H2O. The catalysed reaction is (5S)-hydroperoxy-(6E,8Z,11Z,14Z,17Z)-eicosapentaenoate + 2 glutathione = (5S)-hydroxy-(6E,8Z,11Z,14Z,17Z)-eicosapentaenoate + glutathione disulfide + H2O. It carries out the reaction (12S)-hydroperoxy-(5Z,8Z,10E,14Z,17Z)-eicosapentaenoate + 2 glutathione = (12S)-hydroxy-(5Z,8Z,10E,14Z,17Z)-eicosapentaenoate + glutathione disulfide + H2O. The enzyme catalyses (15S)-hydroperoxy-(5Z,8Z,11Z,13E,17Z)-eicosapentaenoate + 2 glutathione = (15S)-hydroxy-(5Z,8Z,11Z,13E,17Z)-eicosapentaenoate + glutathione disulfide + H2O. It catalyses the reaction (15S)-hydroperoxy-(11Z,13E)-eicosadienoate + 2 glutathione = (15S)-hydroxy-(11Z,13E)-eicosadienoate + glutathione disulfide + H2O. The catalysed reaction is (17S)-hydroperoxy-(4Z,7Z,10Z,13Z,15E,19Z)-docosahexaenoate + 2 glutathione = (17S)-hydroxy-(4Z,7Z,10Z,13Z,15E,19Z)-docosahexaenoate + glutathione disulfide + H2O. In terms of biological role, catalyzes the reduction of hydroperoxides in a glutathione-dependent manner thus regulating cellular redox homeostasis. Can reduce small soluble hydroperoxides such as H2O2, cumene hydroperoxide and tert-butyl hydroperoxide, as well as several fatty acid-derived hydroperoxides. In platelets catalyzes the reduction of 12-hydroperoxyeicosatetraenoic acid, the primary product of the arachidonate 12-lipoxygenase pathway. The chain is Glutathione peroxidase 1 from Rattus norvegicus (Rat).